Reading from the N-terminus, the 56-residue chain is Large ribosomal subunit protein bL32 (56 aa).

Residues 1–56 (MAVPARRTSKAKKNKRRTHKGLTTPGLSRDSETGEYRMSHRISPDGTYKGRTIIEK) are disordered. The segment covering 7 to 20 (RTSKAKKNKRRTHK) has biased composition (basic residues). The span at 29-38 (RDSETGEYRM) shows a compositional bias: basic and acidic residues.

Belongs to the bacterial ribosomal protein bL32 family.

The sequence is that of Large ribosomal subunit protein bL32 from Listeria monocytogenes serotype 4a (strain HCC23).